A 203-amino-acid chain; its full sequence is Ribosomal RNA large subunit methyltransferase E (203 aa).

Positions 59, 61, 79, 97, and 119 each coordinate S-adenosyl-L-methionine. The Proton acceptor role is filled by K159.

The protein belongs to the class I-like SAM-binding methyltransferase superfamily. RNA methyltransferase RlmE family.

Its subcellular location is the cytoplasm. It catalyses the reaction uridine(2552) in 23S rRNA + S-adenosyl-L-methionine = 2'-O-methyluridine(2552) in 23S rRNA + S-adenosyl-L-homocysteine + H(+). Functionally, specifically methylates the uridine in position 2552 of 23S rRNA at the 2'-O position of the ribose in the fully assembled 50S ribosomal subunit. This chain is Ribosomal RNA large subunit methyltransferase E, found in Desulforapulum autotrophicum (strain ATCC 43914 / DSM 3382 / VKM B-1955 / HRM2) (Desulfobacterium autotrophicum).